The following is a 346-amino-acid chain: Eukaryotic translation initiation factor 3 subunit I (346 aa).

WD repeat units lie at residues 8-47 (GHER…RLGT), 50-89 (GHNG…IAHS), 150-189 (EGCA…CLEI), 192-233 (LHKQ…KTYE), and 289-328 (DHFG…FDFK).

Belongs to the eIF-3 subunit I family. As to quaternary structure, component of the eukaryotic translation initiation factor 3 (eIF-3) complex.

The protein resides in the cytoplasm. Functionally, component of the eukaryotic translation initiation factor 3 (eIF-3) complex, which is involved in protein synthesis of a specialized repertoire of mRNAs and, together with other initiation factors, stimulates binding of mRNA and methionyl-tRNAi to the 40S ribosome. The eIF-3 complex specifically targets and initiates translation of a subset of mRNAs involved in cell proliferation. The chain is Eukaryotic translation initiation factor 3 subunit I from Eremothecium gossypii (strain ATCC 10895 / CBS 109.51 / FGSC 9923 / NRRL Y-1056) (Yeast).